We begin with the raw amino-acid sequence, 1000 residues long: Chloride channel protein D (1000 aa).

2 stretches are compositionally biased toward low complexity: residues methionine 1–asparagine 16 and asparagine 38–valine 60. A disordered region spans residues methionine 1 to glutamate 90. At methionine 1 to tryptophan 256 the chain is on the cytoplasmic side. A compositionally biased stretch (basic and acidic residues) spans arginine 71–glutamate 80. 10 helical membrane-spanning segments follow: residues isoleucine 257 to valine 277, alanine 290 to leucine 310, glycine 416 to leucine 436, phenylalanine 442 to methionine 462, isoleucine 493 to isoleucine 513, leucine 534 to phenylalanine 554, leucine 678 to alanine 698, methionine 710 to glycine 730, valine 733 to serine 753, and tyrosine 772 to histidine 792. 2 CBS domains span residues methionine 824–valine 881 and methionine 926–leucine 984.

This sequence belongs to the chloride channel (TC 2.A.49) family.

Its subcellular location is the membrane. Its function is as follows. Voltage-gated chloride channel. Chloride channels may have several functions including the regulation of cell volume, membrane potential stabilization and signal transduction. Required for normal aggregation. The polypeptide is Chloride channel protein D (clcD) (Dictyostelium discoideum (Social amoeba)).